Reading from the N-terminus, the 487-residue chain is N-succinylglutamate 5-semialdehyde dehydrogenase (487 aa).

221–226 (GSSDTG) provides a ligand contact to NAD(+). Residues E244 and C278 contribute to the active site.

This sequence belongs to the aldehyde dehydrogenase family. AstD subfamily.

It carries out the reaction N-succinyl-L-glutamate 5-semialdehyde + NAD(+) + H2O = N-succinyl-L-glutamate + NADH + 2 H(+). The protein operates within amino-acid degradation; L-arginine degradation via AST pathway; L-glutamate and succinate from L-arginine: step 4/5. Catalyzes the NAD-dependent reduction of succinylglutamate semialdehyde into succinylglutamate. The sequence is that of N-succinylglutamate 5-semialdehyde dehydrogenase from Burkholderia multivorans (strain ATCC 17616 / 249).